A 480-amino-acid chain; its full sequence is DnaJ homolog subfamily A member 3, mitochondrial (480 aa).

Residue R58 is modified to Omega-N-methylarginine; by CARM1. Residues 93-158 (DYYQILGVPR…VKRKQYDAYG (66 aa)) enclose the J domain. Residue K134 is modified to N6-acetyllysine. The CR-type zinc finger occupies 223–301 (GVNKEFTVNI…CRGAGQAKQK (79 aa)). Zn(2+) is bound at residue C236. CXXCXGXG motif repeat units follow at residues 236–243 (CERCDGKG), 253–260 (CHYCGGSG), 275–282 (CRRCGGRG), and 289–296 (CVVCRGAG). R238 carries the post-translational modification Omega-N-methylarginine; by CARM1. C239, C253, C256, C275, C278, C289, and C292 together coordinate Zn(2+). Position 293 is an omega-N-methylarginine; by CARM1 (R293). S398 bears the Phosphoserine mark. The interval 437-468 (TVNGVTHTSTGGRTMDSSAGSKDRREAGEDNE) is disordered. Residues 439-456 (NGVTHTSTGGRTMDSSAG) show a composition bias toward polar residues.

As to quaternary structure, interacts with JAK2, HSPA9B and IFN-gammaR2 chain. Interacts with Ras GTPase-activating protein 1 (RASA1). Isoform 2 interacts with MUSK (via the cytoplasmic domain). Tyrosine phosphorylated.

The protein localises to the mitochondrion matrix. Its subcellular location is the cytoplasm. The protein resides in the cytosol. It localises to the postsynaptic cell membrane. Its function is as follows. Modulates apoptotic signal transduction or effector structures within the mitochondrial matrix. Affect cytochrome C release from the mitochondria and caspase 3 activation, but not caspase 8 activation. Isoform 1 increases apoptosis triggered by both TNF and the DNA-damaging agent mytomycin C; in sharp contrast, isoform 2 suppresses apoptosis. Can modulate IFN-gamma-mediated transcriptional activity. Isoform 2 may play a role in neuromuscular junction development as an effector of the MUSK signaling pathway. This Mus musculus (Mouse) protein is DnaJ homolog subfamily A member 3, mitochondrial (Dnaja3).